A 298-amino-acid polypeptide reads, in one-letter code: Acetylglutamate kinase (298 aa).

Residues 69-70 (GG), Arg91, and Asn191 contribute to the substrate site.

It belongs to the acetylglutamate kinase family. ArgB subfamily.

It localises to the cytoplasm. The catalysed reaction is N-acetyl-L-glutamate + ATP = N-acetyl-L-glutamyl 5-phosphate + ADP. The protein operates within amino-acid biosynthesis; L-arginine biosynthesis; N(2)-acetyl-L-ornithine from L-glutamate: step 2/4. Functionally, catalyzes the ATP-dependent phosphorylation of N-acetyl-L-glutamate. In Neisseria meningitidis serogroup C / serotype 2a (strain ATCC 700532 / DSM 15464 / FAM18), this protein is Acetylglutamate kinase.